Here is a 1216-residue protein sequence, read N- to C-terminus: Coatomer subunit alpha-1 (1216 aa).

WD repeat units lie at residues 7–48, 49–88, 91–132, 133–172, 202–241, 246–285, 288–326, and 363–404; these read TKSN…DRFD, EHEGPVRGVHFHNSQPLFVSGGDDYKIKVWNYKNHRCLFT, GHLD…SVLT, GHNHYVMCASFHPKEDLVVSASLDQTVRVWDIGALRKKTV, GHDRGVNWAAFHPTLPLIVSGADDRQVKLWRMNETKAWEV, GHMNNVSSVMFHAKQDIIVSNSEDKSIRVWDATKRTGLQT, REHDRFWILAVHPEMNLLAAGHDSGMIVFKLERERPAFA, and SLNQ…VGRS.

In terms of assembly, oligomeric complex that consists of at least the alpha, beta, beta', gamma, delta, epsilon and zeta subunits.

It is found in the cytoplasm. The protein localises to the golgi apparatus membrane. It localises to the cytoplasmic vesicle. The protein resides in the COPI-coated vesicle membrane. In terms of biological role, the coatomer is a cytosolic protein complex that binds to dilysine motifs and reversibly associates with Golgi non-clathrin-coated vesicles, which further mediate biosynthetic protein transport from the ER, via the Golgi up to the trans Golgi network. Coatomer complex is required for budding from Golgi membranes, and is essential for the retrograde Golgi-to-ER transport of dilysine-tagged proteins. In Arabidopsis thaliana (Mouse-ear cress), this protein is Coatomer subunit alpha-1.